A 698-amino-acid chain; its full sequence is Auxin response factor 22 (698 aa).

The TF-B3 DNA-binding region spans 128–230; it reads FAKTLTQSDA…ELCVGIRRAK (103 aa). Polar residues predominate over residues 549–577; sequence TSSGSTETLSPGVTGNSSPNGNAHKTGNA. A disordered region spans residues 549–579; the sequence is TSSGSTETLSPGVTGNSSPNGNAHKTGNASD. Residues 603–683 form the PB1 domain; it reads AGHCKVFMES…RRLTIIAGDR (81 aa).

This sequence belongs to the ARF family. Homodimers and heterodimers. As to expression, expressed in roots, culms, leaves and young panicles.

It localises to the nucleus. In terms of biological role, auxin response factors (ARFs) are transcriptional factors that bind specifically to the DNA sequence 5'-TGTCTC-3' found in the auxin-responsive promoter elements (AuxREs). The polypeptide is Auxin response factor 22 (ARF22) (Oryza sativa subsp. japonica (Rice)).